The following is a 190-amino-acid chain: Probable thymidylate kinase (190 aa).

Residue 7–14 (GIDGAGKT) participates in ATP binding.

It belongs to the thymidylate kinase family.

It catalyses the reaction dTMP + ATP = dTDP + ADP. The polypeptide is Probable thymidylate kinase (Thermoplasma volcanium (strain ATCC 51530 / DSM 4299 / JCM 9571 / NBRC 15438 / GSS1)).